A 448-amino-acid chain; its full sequence is tRNA modification GTPase MnmE (448 aa).

(6S)-5-formyl-5,6,7,8-tetrahydrofolate-binding residues include R24, E81, and K120. A TrmE-type G domain is found at 216 to 373 (GLNVVLVGAP…LKRTLLREAG (158 aa)). Position 226 (N226) interacts with K(+). GTP is bound by residues 226–231 (NVGKSS), 245–251 (TDIAGTT), and 270–273 (DTAG). S230 contributes to the Mg(2+) binding site. Residues T245, I247, and T250 each contribute to the K(+) site. T251 contributes to the Mg(2+) binding site. K448 provides a ligand contact to (6S)-5-formyl-5,6,7,8-tetrahydrofolate.

Belongs to the TRAFAC class TrmE-Era-EngA-EngB-Septin-like GTPase superfamily. TrmE GTPase family. As to quaternary structure, homodimer. Heterotetramer of two MnmE and two MnmG subunits. The cofactor is K(+).

It localises to the cytoplasm. Functionally, exhibits a very high intrinsic GTPase hydrolysis rate. Involved in the addition of a carboxymethylaminomethyl (cmnm) group at the wobble position (U34) of certain tRNAs, forming tRNA-cmnm(5)s(2)U34. The sequence is that of tRNA modification GTPase MnmE from Neisseria meningitidis serogroup C / serotype 2a (strain ATCC 700532 / DSM 15464 / FAM18).